Here is a 548-residue protein sequence, read N- to C-terminus: 2-succinyl-5-enolpyruvyl-6-hydroxy-3-cyclohexene-1-carboxylate synthase (548 aa).

Belongs to the TPP enzyme family. MenD subfamily. As to quaternary structure, homodimer. Mg(2+) is required as a cofactor. Mn(2+) serves as cofactor. The cofactor is thiamine diphosphate.

The catalysed reaction is isochorismate + 2-oxoglutarate + H(+) = 5-enolpyruvoyl-6-hydroxy-2-succinyl-cyclohex-3-ene-1-carboxylate + CO2. The protein operates within quinol/quinone metabolism; 1,4-dihydroxy-2-naphthoate biosynthesis; 1,4-dihydroxy-2-naphthoate from chorismate: step 2/7. It participates in quinol/quinone metabolism; menaquinone biosynthesis. Its function is as follows. Catalyzes the thiamine diphosphate-dependent decarboxylation of 2-oxoglutarate and the subsequent addition of the resulting succinic semialdehyde-thiamine pyrophosphate anion to isochorismate to yield 2-succinyl-5-enolpyruvyl-6-hydroxy-3-cyclohexene-1-carboxylate (SEPHCHC). The protein is 2-succinyl-5-enolpyruvyl-6-hydroxy-3-cyclohexene-1-carboxylate synthase of Mycobacterium ulcerans (strain Agy99).